Reading from the N-terminus, the 533-residue chain is AAA-ATPase At5g17740 (533 aa).

A helical transmembrane segment spans residues 11–27 (ASMFSTYASMMGYVMII). Position 252 to 259 (252 to 259 (GPPGTGKS)) interacts with ATP.

The protein belongs to the AAA ATPase family. BCS1 subfamily. It depends on Mg(2+) as a cofactor.

The protein localises to the membrane. It carries out the reaction ATP + H2O = ADP + phosphate + H(+). This is AAA-ATPase At5g17740 from Arabidopsis thaliana (Mouse-ear cress).